A 620-amino-acid polypeptide reads, in one-letter code: Chaperone protein HscA homolog (620 aa).

It belongs to the heat shock protein 70 family.

Functionally, chaperone involved in the maturation of iron-sulfur cluster-containing proteins. Has a low intrinsic ATPase activity which is markedly stimulated by HscB. This chain is Chaperone protein HscA homolog, found in Pseudomonas putida (strain ATCC 47054 / DSM 6125 / CFBP 8728 / NCIMB 11950 / KT2440).